We begin with the raw amino-acid sequence, 169 residues long: Deoxyuridine 5'-triphosphate nucleotidohydrolase (169 aa).

Residues M1 to E10 are compositionally biased toward polar residues. Residues M1–E25 form a disordered region. Residues R91 to G93, G105 to D108, G116, R159, and F164 to G165 contribute to the substrate site.

Belongs to the dUTPase family. As to quaternary structure, homodimer. It depends on Mg(2+) as a cofactor. Vegetative and floral merismatic cells and provascular and vascular merismatic derivatives.

It catalyses the reaction dUTP + H2O = dUMP + diphosphate + H(+). It participates in pyrimidine metabolism; dUMP biosynthesis; dUMP from dCTP (dUTP route): step 2/2. Functionally, this enzyme is involved in nucleotide metabolism: it produces dUMP, the immediate precursor of thymidine nucleotides and it decreases the intracellular concentration of dUTP so that uracil cannot be incorporated into DNA. It may have as well a metabolic role in merismatic cells. In Solanum lycopersicum (Tomato), this protein is Deoxyuridine 5'-triphosphate nucleotidohydrolase.